The chain runs to 418 residues: tRNA-2-methylthio-N(6)-dimethylallyladenosine synthase (418 aa).

The MTTase N-terminal domain maps to 2 to 118; that stretch reads PGYYLWTIGC…WREIPEGFIL (117 aa). [4Fe-4S] cluster-binding residues include Cys-11, Cys-47, Cys-81, Cys-134, Cys-138, and Cys-141. One can recognise a Radical SAM core domain in the interval 120–351; sequence LRPPVSANVT…EDLQKETVGK (232 aa). Positions 346–414 constitute a TRAM domain; that stretch reads KETVGKANAA…PWSLQAKLVN (69 aa).

The protein belongs to the methylthiotransferase family. MiaB subfamily. In terms of assembly, monomer. [4Fe-4S] cluster serves as cofactor.

It is found in the cytoplasm. It carries out the reaction N(6)-dimethylallyladenosine(37) in tRNA + (sulfur carrier)-SH + AH2 + 2 S-adenosyl-L-methionine = 2-methylsulfanyl-N(6)-dimethylallyladenosine(37) in tRNA + (sulfur carrier)-H + 5'-deoxyadenosine + L-methionine + A + S-adenosyl-L-homocysteine + 2 H(+). In terms of biological role, catalyzes the methylthiolation of N6-(dimethylallyl)adenosine (i(6)A), leading to the formation of 2-methylthio-N6-(dimethylallyl)adenosine (ms(2)i(6)A) at position 37 in tRNAs that read codons beginning with uridine. This Dehalococcoides mccartyi (strain CBDB1) protein is tRNA-2-methylthio-N(6)-dimethylallyladenosine synthase.